Here is a 320-residue protein sequence, read N- to C-terminus: FHA domain-containing protein FHA2 (320 aa).

A2 carries the post-translational modification N-acetylalanine. The FHA domain maps to 32 to 89 (IILGRNSKKATVDVDLSSLGGGMNISRNHARIFYDFTRRRFSLEVLGKNGCLVEGVLH). Positions 138-211 (VPYHNYQSGP…REGRSKVDRE (74 aa)) are disordered. A compositionally biased stretch (acidic residues) spans 163–178 (EYDDEDDDDDDDEEDD). The segment covering 198–210 (GEKKREGRSKVDR) has biased composition (basic and acidic residues).

In terms of tissue distribution, widely expressed.

The protein localises to the nucleus. In terms of biological role, may play a role in the control of plant organ development and specifically in the regulation of stamen development. Does not show transactivation activity in yeast. This chain is FHA domain-containing protein FHA2, found in Arabidopsis thaliana (Mouse-ear cress).